The following is a 501-amino-acid chain: Probable cytosol aminopeptidase (501 aa).

Mn(2+) is bound by residues lysine 268 and aspartate 273. Lysine 280 is a catalytic residue. Residues aspartate 291, aspartate 350, and glutamate 352 each coordinate Mn(2+). Arginine 354 is an active-site residue.

Belongs to the peptidase M17 family. Requires Mn(2+) as cofactor.

The protein localises to the cytoplasm. It catalyses the reaction Release of an N-terminal amino acid, Xaa-|-Yaa-, in which Xaa is preferably Leu, but may be other amino acids including Pro although not Arg or Lys, and Yaa may be Pro. Amino acid amides and methyl esters are also readily hydrolyzed, but rates on arylamides are exceedingly low.. The catalysed reaction is Release of an N-terminal amino acid, preferentially leucine, but not glutamic or aspartic acids.. Functionally, presumably involved in the processing and regular turnover of intracellular proteins. Catalyzes the removal of unsubstituted N-terminal amino acids from various peptides. This Nitrosococcus oceani (strain ATCC 19707 / BCRC 17464 / JCM 30415 / NCIMB 11848 / C-107) protein is Probable cytosol aminopeptidase.